The primary structure comprises 193 residues: ATP synthase subunit b 2 (193 aa).

Residues 44-64 (IFWLVLTLLAIYFVLTKIALP) traverse the membrane as a helical segment.

Belongs to the ATPase B chain family. As to quaternary structure, F-type ATPases have 2 components, F(1) - the catalytic core - and F(0) - the membrane proton channel. F(1) has five subunits: alpha(3), beta(3), gamma(1), delta(1), epsilon(1). F(0) has three main subunits: a(1), b(2) and c(10-14). The alpha and beta chains form an alternating ring which encloses part of the gamma chain. F(1) is attached to F(0) by a central stalk formed by the gamma and epsilon chains, while a peripheral stalk is formed by the delta and b chains.

It is found in the cell inner membrane. F(1)F(0) ATP synthase produces ATP from ADP in the presence of a proton or sodium gradient. F-type ATPases consist of two structural domains, F(1) containing the extramembraneous catalytic core and F(0) containing the membrane proton channel, linked together by a central stalk and a peripheral stalk. During catalysis, ATP synthesis in the catalytic domain of F(1) is coupled via a rotary mechanism of the central stalk subunits to proton translocation. Its function is as follows. Component of the F(0) channel, it forms part of the peripheral stalk, linking F(1) to F(0). The b'-subunit is a diverged and duplicated form of b found in plants and photosynthetic bacteria. The protein is ATP synthase subunit b 2 (atpF2) of Jannaschia sp. (strain CCS1).